The chain runs to 75 residues: Sperm-specific protein PL-I (75 aa).

Residues Gly2–Lys74 enclose the H15 domain.

The protein belongs to the histone H1/H5 family. In terms of tissue distribution, sperm.

The protein resides in the nucleus. It localises to the chromosome. Functionally, linker histones are implicated in chromatin remodeling and/or transcriptional regulation during spermiogenesis, the process of spermatid maturation into spermatozoa. This is Sperm-specific protein PL-I from Spisula solidissima (Atlantic surf-clam).